Consider the following 221-residue polypeptide: Protein-L-isoaspartate O-methyltransferase (221 aa).

Residue Ser68 is part of the active site.

Belongs to the methyltransferase superfamily. L-isoaspartyl/D-aspartyl protein methyltransferase family.

It localises to the cytoplasm. It carries out the reaction [protein]-L-isoaspartate + S-adenosyl-L-methionine = [protein]-L-isoaspartate alpha-methyl ester + S-adenosyl-L-homocysteine. Catalyzes the methyl esterification of L-isoaspartyl residues in peptides and proteins that result from spontaneous decomposition of normal L-aspartyl and L-asparaginyl residues. It plays a role in the repair and/or degradation of damaged proteins. The protein is Protein-L-isoaspartate O-methyltransferase of Desulfosudis oleivorans (strain DSM 6200 / JCM 39069 / Hxd3) (Desulfococcus oleovorans).